The chain runs to 486 residues: Scarecrow-like protein 15 (486 aa).

A disordered region spans residues 1-28 (MKIPASSPQDTTNNNNNTNSTDSNHLSM). A compositionally biased stretch (low complexity) spans 10–24 (DTTNNNNNTNSTDSN). A GRAS domain is found at 113–485 (DSVDNGGFDF…RALVATSAWR (373 aa)). A leucine repeat I (LRI) region spans residues 120 to 179 (FDFIEDLIRVVDCVESDELQLAQVVLSRLNQRLRSPAGRPLQRAAFYFKEALGSFLTGSN). Positions 198–266 (IKEYSGISPI…VSGGFLRVTA (69 aa)) are VHIID. The VHIID motif lies at 232-236 (VHVVD). The segment at 278 to 310 (LVKENLTQFAAEMKIRFQIEFVLMKTFEMLSFK) is leucine repeat II (LRII). A PFYRE region spans residues 320-410 (TVVLISPAIF…AFVLRPKISA (91 aa)). The interval 413 to 485 (ETAADRRHTG…RALVATSAWR (73 aa)) is SAW.

It belongs to the GRAS family. As to expression, expressed in seedlings, roots, leaves and flowers.

It localises to the nucleus. In terms of biological role, probable transcription factor involved in plant development. The polypeptide is Scarecrow-like protein 15 (SCL15) (Arabidopsis thaliana (Mouse-ear cress)).